Consider the following 304-residue polypeptide: UDP-3-O-acyl-N-acetylglucosamine deacetylase (304 aa).

Positions 78, 237, and 241 each coordinate Zn(2+). Residue His-264 is the Proton donor of the active site.

Belongs to the LpxC family. Requires Zn(2+) as cofactor.

It catalyses the reaction a UDP-3-O-[(3R)-3-hydroxyacyl]-N-acetyl-alpha-D-glucosamine + H2O = a UDP-3-O-[(3R)-3-hydroxyacyl]-alpha-D-glucosamine + acetate. Its pathway is glycolipid biosynthesis; lipid IV(A) biosynthesis; lipid IV(A) from (3R)-3-hydroxytetradecanoyl-[acyl-carrier-protein] and UDP-N-acetyl-alpha-D-glucosamine: step 2/6. Functionally, catalyzes the hydrolysis of UDP-3-O-myristoyl-N-acetylglucosamine to form UDP-3-O-myristoylglucosamine and acetate, the committed step in lipid A biosynthesis. The chain is UDP-3-O-acyl-N-acetylglucosamine deacetylase from Alcanivorax borkumensis (strain ATCC 700651 / DSM 11573 / NCIMB 13689 / SK2).